We begin with the raw amino-acid sequence, 141 residues long: Nucleoside diphosphate kinase (141 aa).

The ATP site is built by lysine 11, phenylalanine 59, arginine 87, threonine 93, arginine 104, and asparagine 114. Histidine 117 serves as the catalytic Pros-phosphohistidine intermediate.

Belongs to the NDK family. In terms of assembly, homotetramer. Mg(2+) is required as a cofactor.

The protein resides in the cytoplasm. It catalyses the reaction a 2'-deoxyribonucleoside 5'-diphosphate + ATP = a 2'-deoxyribonucleoside 5'-triphosphate + ADP. It carries out the reaction a ribonucleoside 5'-diphosphate + ATP = a ribonucleoside 5'-triphosphate + ADP. Major role in the synthesis of nucleoside triphosphates other than ATP. The ATP gamma phosphate is transferred to the NDP beta phosphate via a ping-pong mechanism, using a phosphorylated active-site intermediate. This Pseudomonas fluorescens (strain ATCC BAA-477 / NRRL B-23932 / Pf-5) protein is Nucleoside diphosphate kinase.